Here is a 1018-residue protein sequence, read N- to C-terminus: Fibronectin-binding protein A (1018 aa).

Residues 1–36 form the signal peptide; the sequence is MKNNLRYGIRKHKLGAASVFLGTMIVVGMGQDKEAA. Positions 7 to 18 match the YSIRK-G/S signaling motif motif; sequence YGIRKHKLGAAS. Positions 37–511 are ligand-binding A region; sequence ASEQKTTTVE…SNKANGNEKN (475 aa). 2 disordered regions span residues 38–61 and 78–195; these read SEQK…SETQ and ATVT…ETGT. Polar residues-rich tracts occupy residues 39-61 and 78-92; these read EQKT…SETQ and ATVT…QVTT. A compositionally biased stretch (basic and acidic residues) spans 112 to 126; that stretch reads TVKEEVVKEEAKPQV. Over residues 129-139 the composition is skewed to polar residues; sequence TTQSQDNSGDQ. Positions 194-511 are fibrinogen/elastin/tropoelastin-binding; that stretch reads GTDVTSKVTV…SNKANGNEKN (318 aa). The interval 512–872 is fibronectin-binding; sequence GPIIQNNKFE…EGQQTIEEDT (361 aa). One copy of the B-1 repeat lies at 545–574; that stretch reads EEYDSSTLDIDYHTAIDGGGGYVDGYIETI. The 2 X approximate tandem repeats stretch occupies residues 545–604; the sequence is EEYDSSTLDIDYHTAIDGGGGYVDGYIETIEETDSSAIDIDYHTAVDSEAGHVGGYTESS. The stretch at 575-604 is one B-2 repeat; that stretch reads EETDSSAIDIDYHTAVDSEAGHVGGYTESS. Disordered regions lie at residues 595-622, 740-813, and 827-997; these read GHVG…NSKH, LGYE…DIDF, and EIIE…GMLF. The stretch at 745-782 is one D-1 repeat; sequence GQNSGNQSFEEDTEEDKPKYEQGGNIVDIDFDSVPQIH. The tract at residues 745–878 is 4 X approximate tandem repeats, D-3 repeat has more fibronectin-binding activity; that stretch reads GQNSGNQSFE…EEDTTPPIVP (134 aa). One copy of the D-2 repeat lies at 783–820; the sequence is GQNKGNQSFEEDTEKDKPKYEHGGNIIDIDFDSVPHIH. The stretch at 821–859 is one D-3 repeat; sequence GFNKHTEIIEEDTNKDKPSYQFGGHNSVDFEEDTLPKVS. Over residues 827 to 838 the composition is skewed to basic and acidic residues; that stretch reads EIIEEDTNKDKP. The stretch at 860 to 878 is one D-4; truncated repeat; that stretch reads GQNEGQQTIEEDTTPPIVP. Pro residues predominate over residues 875–938; sequence PIVPPTPPTP…PAEPGKPVPP (64 aa). WR repeat units follow at residues 879–892, 893–906, 907–920, 921–934, and 935–948; these read PTPP…EPET, PTPP…EPGK, and PVPP…KPSK. The interval 879–948 is 5 X tandem repeats, Pro-rich (WR); that stretch reads PTPPTPEVPS…AKEEPKKPSK (70 aa). The LPXTG sorting signal motif lies at 982-986; that stretch reads LPETG. Residue Thr985 is modified to Pentaglycyl murein peptidoglycan amidated threonine. Residues 986-1018 constitute a propeptide, removed by sortase; that stretch reads GGEESTNKGMLFGGLFSILGLALLRRNKKNHKA.

It localises to the secreted. The protein resides in the cell wall. Possesses multiple, substituting fibronectin (Fn) binding regions, each capable of conferring adherence to both soluble and immobilized forms of Fn. This confers to S.aureus the ability to invade endothelial cells both in vivo and in vitro, without requiring additional factors, although in a slow and inefficient way through actin rearrangements in host cells. This invasion process is mediated by integrin alpha-5/beta-1. Promotes bacterial attachment to both soluble and immobilized forms of fibrinogen (Fg) by means of a unique binding site localized within the 17 C-terminal residues of the gamma-chain of human Fg. Both plasma proteins (Fn and Fg) function as a bridge between bacterium and host cell. Promotes attachment to immobilized elastin peptides in a dose-dependent and saturable manner. Promotes attachment to both full-length and segments of immobilized human tropoelastin at multiple sites in a dose and pH-dependent manner. Promotes adherence to and aggregation of activated platelets independently of other S.aureus surface molecules. Is a critical mediator implicated in the induction of experimental endocarditis in rats with catheter-induced aortic vegetations, promoting both colonization and persistence of the bacterium into the host. This chain is Fibronectin-binding protein A (fnbA), found in Staphylococcus aureus (strain NCTC 8325 / PS 47).